Here is a 60-residue protein sequence, read N- to C-terminus: Large ribosomal subunit protein bL32 (60 aa).

The segment at 1 to 22 (MAVPARHTSKAKKNKRRTHYKL) is disordered. Basic residues predominate over residues 7-20 (HTSKAKKNKRRTHY).

Belongs to the bacterial ribosomal protein bL32 family.

The chain is Large ribosomal subunit protein bL32 from Streptococcus pyogenes serotype M3 (strain ATCC BAA-595 / MGAS315).